A 359-amino-acid polypeptide reads, in one-letter code: PWWP domain-containing protein 1 (359 aa).

The tract at residues 1 to 37 is disordered; the sequence is MNNARTNAKRRRLSSKQGGLSISEGKESNIPSVVEES. The region spanning 52-114 is the PWWP domain; the sequence is FGDRILVKAP…RNSVKPLLDS (63 aa). 2 disordered regions span residues 133 to 161 and 204 to 255; these read AYEASKTPPDLKEESSTDEEMDSLSAAEE and VAST…SPLN. Residues 204–224 are compositionally biased toward polar residues; sequence VASTSRSSTQLSDQRYPLSSN. Ser-252 carries the phosphoserine modification.

In terms of assembly, interacts with set9 and histone H4K20me1. Associates with nucleosomes.

It is found in the nucleus. Its function is as follows. Necessary for DNA damage checkpoint activation. Required for the association of set9 with chromatin and subsequent methylation of H4K20. Associates with H4K20me1 to increase the concentration of set9 on chromatin to perform H4K20me3. H4K20me3 is mainly enriched at heterochromatin and is required for proper heterochromatin assembly. The sequence is that of PWWP domain-containing protein 1 (pdp1) from Schizosaccharomyces pombe (strain 972 / ATCC 24843) (Fission yeast).